A 404-amino-acid chain; its full sequence is Probable eukaryotic initiation factor 4A (404 aa).

Residues 1–28 (MAQQGKVEPQDQDSFLDDQPGIRPIPSF) form a disordered region. The Q motif signature appears at 26-54 (PSFDDMPLHQNLLRGIYSHGFEKPSSIQQ). Residues 57–231 (IVPFTRGGDI…KKFMRDPTRI (175 aa)) enclose the Helicase ATP-binding domain. 70–77 (AQSGTGKT) contacts ATP. The short motif at 179–182 (DEAD) is the DEAD box element. The Helicase C-terminal domain occupies 242–402 (GIKQYFIAVE…ELPVDFAAYL (161 aa)).

Belongs to the DEAD box helicase family. eIF4A subfamily. As to quaternary structure, eIF4F is a multi-subunit complex, the composition of which varies with external and internal environmental conditions. It is composed of at least EIF4A, EIF4E and EIF4G.

It carries out the reaction ATP + H2O = ADP + phosphate + H(+). Its function is as follows. ATP-dependent RNA helicase which is a subunit of the eIF4F complex involved in cap recognition and is required for mRNA binding to ribosome. In the current model of translation initiation, eIF4A unwinds RNA secondary structures in the 5'-UTR of mRNAs which is necessary to allow efficient binding of the small ribosomal subunit, and subsequent scanning for the initiator codon. The protein is Probable eukaryotic initiation factor 4A of Trypanosoma cruzi (strain CL Brener).